A 361-amino-acid polypeptide reads, in one-letter code: Protein SSUH2 homolog (361 aa).

It is found in the cytoplasm. The protein localises to the nucleus. Its function is as follows. Plays a role in odontogenesis. The sequence is that of Protein SSUH2 homolog from Danio rerio (Zebrafish).